A 404-amino-acid polypeptide reads, in one-letter code: Probable tRNA sulfurtransferase (404 aa).

The region spanning 60 to 165 is the THUMP domain; it reads EEVIPKLSKV…KDAAYLSYET (106 aa). Residues 183-184, 208-209, arginine 265, glycine 287, and glutamine 296 contribute to the ATP site; these read ML and HF.

Belongs to the ThiI family.

The protein localises to the cytoplasm. It carries out the reaction [ThiI sulfur-carrier protein]-S-sulfanyl-L-cysteine + a uridine in tRNA + 2 reduced [2Fe-2S]-[ferredoxin] + ATP + H(+) = [ThiI sulfur-carrier protein]-L-cysteine + a 4-thiouridine in tRNA + 2 oxidized [2Fe-2S]-[ferredoxin] + AMP + diphosphate. The enzyme catalyses [ThiS sulfur-carrier protein]-C-terminal Gly-Gly-AMP + S-sulfanyl-L-cysteinyl-[cysteine desulfurase] + AH2 = [ThiS sulfur-carrier protein]-C-terminal-Gly-aminoethanethioate + L-cysteinyl-[cysteine desulfurase] + A + AMP + 2 H(+). Its pathway is cofactor biosynthesis; thiamine diphosphate biosynthesis. Its function is as follows. Catalyzes the ATP-dependent transfer of a sulfur to tRNA to produce 4-thiouridine in position 8 of tRNAs, which functions as a near-UV photosensor. Also catalyzes the transfer of sulfur to the sulfur carrier protein ThiS, forming ThiS-thiocarboxylate. This is a step in the synthesis of thiazole, in the thiamine biosynthesis pathway. The sulfur is donated as persulfide by IscS. The sequence is that of Probable tRNA sulfurtransferase from Enterococcus faecalis (strain ATCC 700802 / V583).